The sequence spans 125 residues: Large ribosomal subunit protein bL12 (125 aa).

The protein belongs to the bacterial ribosomal protein bL12 family. As to quaternary structure, homodimer. Part of the ribosomal stalk of the 50S ribosomal subunit. Forms a multimeric L10(L12)X complex, where L10 forms an elongated spine to which 2 to 4 L12 dimers bind in a sequential fashion. Binds GTP-bound translation factors.

Its function is as follows. Forms part of the ribosomal stalk which helps the ribosome interact with GTP-bound translation factors. Is thus essential for accurate translation. The chain is Large ribosomal subunit protein bL12 from Sphingopyxis alaskensis (strain DSM 13593 / LMG 18877 / RB2256) (Sphingomonas alaskensis).